The chain runs to 1826 residues: ATPase family AAA domain-containing protein 5 (1826 aa).

Residue serine 44 is modified to Phosphoserine. Lysine 127 is covalently cross-linked (Glycyl lysine isopeptide (Lys-Gly) (interchain with G-Cter in SUMO2)). 7 disordered regions span residues 170–254, 282–311, 323–367, 398–572, 588–623, 647–684, and 709–729; these read SIED…KRAD, PAVP…CEPS, AQVH…RKSN, QQFM…EPGS, RSCS…ARTS, KFTR…TSKN, and VVPL…KSPE. At serine 215 the chain carries Phosphoserine. A compositionally biased stretch (basic and acidic residues) spans 243–254; the sequence is NDSRTHATKRAD. The segment covering 298 to 311 has biased composition (low complexity); sequence SGSEGELSGSCEPS. Phosphoserine is present on residues serine 351 and serine 366. Positions 365 to 381 are interaction with WDR48; it reads KSNVVIQEGQLELAVLE. Residues 418–442 are compositionally biased toward basic and acidic residues; the sequence is KPLEKQKDPSEKSVHEGDSSSEKII. A compositionally biased stretch (polar residues) spans 445 to 456; it reads PNIQRVSSQGCL. Residues 459–468 are compositionally biased toward basic and acidic residues; that stretch reads HADRGSFPKE. Residues 469–481 are compositionally biased toward basic residues; the sequence is KSKKPNKKGKKTR. Positions 487–505 are enriched in basic and acidic residues; sequence NREENIQKEKTAFSLKDEQ. Residues 540–559 are compositionally biased toward polar residues; sequence DSVQMSLCNRNKSRSSSTPT. Serine 591 and serine 603 each carry phosphoserine. Serine 727 and serine 801 each carry phosphoserine. Residues 965–1034 form a disordered region; sequence GKQASPQLQP…NLDPSRDSGT (70 aa). A compositionally biased stretch (basic and acidic residues) spans 1006 to 1019; sequence EEMKGRSKDLDERI. A Phosphoserine modification is found at serine 1104. Position 1119–1126 (1119–1126) interacts with ATP; that stretch reads GPTGVGKT. Residues 1183–1216 are disordered; that stretch reads YNIGKSPKKLNSPGKVVTSPRKLPPSSPKTSGQK. An LXCXE motif motif is present at residues 1415 to 1419; that stretch reads LVCSE. Disordered stretches follow at residues 1527-1552 and 1592-1611; these read PASM…RKQK and SNPE…VPQP. The interval 1612–1701 is interaction with RAD51 and RFC5; the sequence is PKTLAEKKCC…ATAEALSFTE (90 aa).

The protein belongs to the AAA ATPase family. Component of a heteropentameric replication factor ATAD5 RFC-like complex composed of one large subunit (ATAD5) and four small subunits (RFC2, RFC3, RFC4 and RFC5). Within the ATAD5 RFC-like complex, interacts with RFC2, RFC4 and RFC5. Within the ATAD5 RFC-like complex, interacts directly via-N terminal with RAD51; the interactions is enhanced under replication stress. Interacts with RB1 predominantly in G1 phase via its LXCXE motif. Interacts with RAD9A in growing cells. The interaction with RAD9A is reduced after exposure to DNA replication-inhibiting agents. Interacts with BRD4. Interacts with PCNA. Interacts with deubiquitinating enzyme USP1, and its associated factor, WDR48. ATR may stimulate the RAD9A dissociation. As to expression, expressed ubiquitously in all cell lines like teratocarcinoma, cell lymphoma, lymphoma.

Its subcellular location is the nucleus. Its function is as follows. Has an important role in DNA replication and in maintaining genome integrity during replication stress. Involved in a RAD9A-related damage checkpoint, a pathway that is important in determining whether DNA damage is compatible with cell survival or whether it requires cell elimination by apoptosis. Modulates the RAD9A interaction with BCL2 and thereby induces DNA damage-induced apoptosis. Promotes PCNA deubiquitination by recruiting the ubiquitin-specific protease 1 (USP1) and WDR48 thereby down-regulating the error-prone damage bypass pathway. As component of the ATAD5 RFC-like complex, regulates the function of the DNA polymerase processivity factor PCNA by unloading the ring-shaped PCNA homotrimer from DNA after replication during the S phase of the cell cycle. This seems to be dependent on its ATPase activity. Plays important roles in restarting stalled replication forks under replication stress, by unloading the PCNA homotrimer from DNA and recruiting RAD51 possibly through an ATR-dependent manner. Ultimately this enables replication fork regression, breakage, and eventual fork restart. Both the PCNA unloading activity and the interaction with WDR48 are required to efficiently recruit RAD51 to stalled replication forks. Promotes the generation of MUS81-mediated single-stranded DNA-associated breaks in response to replication stress, which is an alternative pathway to restart stalled/regressed replication forks. The protein is ATPase family AAA domain-containing protein 5 (Atad5) of Mus musculus (Mouse).